The following is a 163-amino-acid chain: uncharacterized protein (163 aa).

2 disordered regions span residues 1 to 78 (MHSL…NPHS) and 115 to 163 (PKWL…LPCH).

This is an uncharacterized protein from Homo sapiens (Human).